A 127-amino-acid chain; its full sequence is DNA-directed RNA polymerase subunit omega (127 aa).

This sequence belongs to the RNA polymerase subunit omega family. As to quaternary structure, the RNAP catalytic core consists of 2 alpha, 1 beta, 1 beta' and 1 omega subunit. When a sigma factor is associated with the core the holoenzyme is formed, which can initiate transcription.

The catalysed reaction is RNA(n) + a ribonucleoside 5'-triphosphate = RNA(n+1) + diphosphate. In terms of biological role, promotes RNA polymerase assembly. Latches the N- and C-terminal regions of the beta' subunit thereby facilitating its interaction with the beta and alpha subunits. The sequence is that of DNA-directed RNA polymerase subunit omega from Rickettsia typhi (strain ATCC VR-144 / Wilmington).